Consider the following 979-residue polypeptide: Disks large-associated protein 3 (979 aa).

The segment covering 1–10 has biased composition (basic and acidic residues); the sequence is MRGYHGDRGS. Disordered stretches follow at residues 1 to 20, 52 to 95, 136 to 169, 182 to 291, 400 to 429, and 537 to 581; these read MRGYHGDRGSHPRPARFADQ, AGLG…MYPG, FHTLPYQRGPAGAGPGPAPGTGTAPEPRSESPSR, AKSH…CLEG, AMGDEESGDSDGSPKTSPKAVARRFTTRRS, and FRKA…RCSS. Phosphoserine is present on Ser58. Residues 73 to 86 are compositionally biased toward gly residues; sequence PEGGPAGAGVGGGS. A compositionally biased stretch (basic and acidic residues) spans 190-202; it reads PGKRDYNGPKAEG. Gly residues predominate over residues 203–218; the sequence is RGGSGGDSYPGPGSGG. The segment covering 221-246 has biased composition (basic residues); that stretch reads TSHHHHHHHHHHHHQSRHGKRSKSKD. A phosphoserine mark is found at Ser406, Ser409, Ser412, and Ser416. Residues 540 to 549 are compositionally biased toward pro residues; sequence APPPIPPGSQ. A phosphoserine mark is found at Ser643 and Ser645. Disordered stretches follow at residues 741 to 790 and 908 to 940; these read EGYP…RASP and EEKKVPPPIPKKPLRGRGVPVKERSLDSVDRQR. 2 stretches are compositionally biased toward basic and acidic residues: residues 769 to 779 and 927 to 940; these read GRRDSWIERGS and PVKERSLDSVDRQR. 3 positions are modified to phosphoserine: Ser932, Ser935, and Ser967.

The protein belongs to the SAPAP family. Interacts with DLG4/PSD-95.

Its subcellular location is the cell membrane. It localises to the postsynaptic density. The protein localises to the synapse. May play a role in the molecular organization of synapses and neuronal cell signaling. Could be an adapter protein linking ion channel to the subsynaptic cytoskeleton. May induce enrichment of PSD-95/SAP90 at the plasma membrane. This is Disks large-associated protein 3 (DLGAP3) from Homo sapiens (Human).